We begin with the raw amino-acid sequence, 321 residues long: Ribosomal RNA small subunit methyltransferase H (321 aa).

S-adenosyl-L-methionine contacts are provided by residues 43–45 (GGH), D63, F89, D110, and Q117. The disordered stretch occupies residues 286–321 (HPAGKALRAGPRETRDNPRSRSAVLRVAERSERHAA). 2 stretches are compositionally biased toward basic and acidic residues: residues 295–304 (GPRETRDNPR) and 312–321 (VAERSERHAA).

The protein belongs to the methyltransferase superfamily. RsmH family.

The protein resides in the cytoplasm. The enzyme catalyses cytidine(1402) in 16S rRNA + S-adenosyl-L-methionine = N(4)-methylcytidine(1402) in 16S rRNA + S-adenosyl-L-homocysteine + H(+). Specifically methylates the N4 position of cytidine in position 1402 (C1402) of 16S rRNA. This is Ribosomal RNA small subunit methyltransferase H from Acidithiobacillus ferrooxidans (strain ATCC 23270 / DSM 14882 / CIP 104768 / NCIMB 8455) (Ferrobacillus ferrooxidans (strain ATCC 23270)).